We begin with the raw amino-acid sequence, 441 residues long: N-acetylmuramyl-L-alanine amidase (441 aa).

Positions 1 to 25 (MKTKTLFIFSAILTLSIFAPNETFA) are cleaved as a signal peptide.

It belongs to the peptidase S12 family.

The enzyme catalyses Hydrolyzes the link between N-acetylmuramoyl residues and L-amino acid residues in certain cell-wall glycopeptides.. It functions in the pathway cell wall biogenesis; peptidoglycan recycling. Its function is as follows. Involved in muropeptide recycling. Hydrolyzes the amide bond between N-acetylmuramic acid (MurNAc) and the L-alanine residue of the stem peptide. Cannot hydrolyze muropeptides containing N-acetylglucosamine (GlcNAc) at the non-reducing end. The polypeptide is N-acetylmuramyl-L-alanine amidase (Bacillus subtilis (strain 168)).